A 186-amino-acid polypeptide reads, in one-letter code: Large ribosomal subunit protein uL5 (186 aa).

It belongs to the universal ribosomal protein uL5 family. In terms of assembly, part of the 50S ribosomal subunit; contacts the 5S rRNA and probably tRNA. Forms a bridge to the 30S subunit in the 70S ribosome.

Functionally, this is one of the proteins that bind and probably mediate the attachment of the 5S RNA into the large ribosomal subunit, where it forms part of the central protuberance. In the 70S ribosome it contacts protein S13 of the 30S subunit (bridge B1b), connecting the 2 subunits; this bridge is implicated in subunit movement. May contact the P site tRNA; the 5S rRNA and some of its associated proteins might help stabilize positioning of ribosome-bound tRNAs. The chain is Large ribosomal subunit protein uL5 from Pyrococcus furiosus (strain ATCC 43587 / DSM 3638 / JCM 8422 / Vc1).